We begin with the raw amino-acid sequence, 154 residues long: 17.7 kDa class I heat shock protein (154 aa).

In terms of domain architecture, sHSP spans 40 to 154 (ETSAFANTRI…PDVKSIEISG (115 aa)).

The protein belongs to the small heat shock protein (HSP20) family. In terms of assembly, forms oligomeric structures.

It is found in the cytoplasm. This chain is 17.7 kDa class I heat shock protein, found in Solanum peruvianum (Peruvian tomato).